Here is a 508-residue protein sequence, read N- to C-terminus: Cytochrome P450 monooxygenase dmxR5 (508 aa).

Residues 24–44 (LTLGLGAILVVLMSFLAFLSY) form a helical membrane-spanning segment. N387 and N405 each carry an N-linked (GlcNAc...) asparagine glycan. C451 is a heme binding site. N-linked (GlcNAc...) asparagine glycosylation is present at N462. A disordered region spans residues 481-508 (EHKKSTQESGHGVPLPSKLSKFSPREEN).

This sequence belongs to the cytochrome P450 family. Requires heme as cofactor.

It localises to the membrane. The protein operates within secondary metabolite biosynthesis. Functionally, cytochrome P450 monooxygenase; part of the gene cluster that mediates the biosynthesis of the dimeric xanthones cryptosporioptides. The pathway begins with the synthesis of atrochrysone thioester by the polyketide synthase dmx-nrPKS. The atrochrysone carboxyl ACP thioesterase dmxR1 then breaks the thioester bond and releases the atrochrysone carboxylic acid from dmx-nrPKS. Atrochrysone carboxylic acid is decarboxylated by the decarboxylase dmxR15, and oxidized by the anthrone oxygenase dmxR16 to yield emodin. Emodin is then reduced to emodin hydroquinone by the oxidoreductase dmxR7. A-ring reduction by the short chain dehydrogenase dmxR18, dehydration by the scytalone dehydratase-like protein dmxR17 and probable spontaneous re-oxidation, results in overall deoxygenation to chrysophanol. Baeyer-Villiger oxidation by the Baeyer-Villiger monooxygenase (BVMO) dmxR6 then yields monodictylactone in equilibrium with monodictyphenone. In the case of the cryptosporioptides biosynthesis, monodictylactone is reduced at C-12 to an alcohol (by the short chain dehydrogenases dmxR12 or dmxR8) and hydroxylated at C-5 by dmxR9, yielding the electron-rich aromatic which could eliminate H(2)O to form the ortho-quinonemethide, followed by tautomerisation to paraquinone and complete the formal reduction to produce the 10-methylgroup. Conjugate addition of C-4a-OH to the resulting paraquinone by the monooxygenase dmxR10 then gives cyclohexadienone, which is then reduced at C-5 by the short chain dehydrogenase dmxR3 to give the dihydroxanthone. The 6,7-epoxide in the cryptosporioptides could be introduced by the cytochrome P450 monooxygenase dmxL3. The highly reducing PKS dmxL2 manufactures butyrate, which is further carboxylated by dmxL1 to form ethylmalonate. It is not yet clear whether the carboxylation occurs while the butyrate is attached to the ACP of dmxL2, but this unusual fungal metabolite could then be esterified to O-5 by the O-acetyltransferase dmxR13. Finally, dimerization performed by dmxR5 gives the observed dimers cryptosporioptides A, B and C as the final products of the pathway. The protein is Cytochrome P450 monooxygenase dmxR5 of Cryptosporiopsis sp. (strain 8999).